A 688-amino-acid polypeptide reads, in one-letter code: Probable glucan endo-1,3-beta-glucosidase btgC (688 aa).

3 disordered regions span residues 1-91 (MSGP…NLGP), 126-148 (ANIPAERGLSTTGSDNPYVPEPP), and 168-195 (GQLTPGQSVSHLSSTNPSQRNLYDIPYQ). At 1–307 (MSGPNRTYSF…PKPGGGNKKR (307 aa)) the chain is on the cytoplasmic side. Polar residues predominate over residues 175–188 (SVSHLSSTNPSQRN). Residues 308-328 (GWIVGAILAFIIIGAIVGGAV) traverse the membrane as a helical; Signal-anchor for type II membrane protein segment. Over 329-688 (GGTIGHRGNE…IPDCGGKTAT (360 aa)) the chain is Extracellular. A disordered region spans residues 334-363 (HRGNEEPSSASSASSSSTQTATEDTSVNGD). Low complexity predominate over residues 341-355 (SSASSASSSSTQTAT). N-linked (GlcNAc...) asparagine glycosylation is found at Asn408, Asn431, and Asn459. Glu491 (proton donor) is an active-site residue. Glu590 serves as the catalytic Nucleophile. 2 N-linked (GlcNAc...) asparagine glycosylation sites follow: Asn609 and Asn635.

The protein belongs to the glycosyl hydrolase 17 family.

The protein resides in the cell membrane. The catalysed reaction is Hydrolysis of (1-&gt;3)-beta-D-glucosidic linkages in (1-&gt;3)-beta-D-glucans.. Glucanases play a role in cell expansion during growth, in cell-cell fusion during mating, and in spore release during sporulation. This enzyme may be involved in beta-glucan degradation. Active on laminarin and lichenan. The protein is Probable glucan endo-1,3-beta-glucosidase btgC (btgC) of Aspergillus fumigatus (strain ATCC MYA-4609 / CBS 101355 / FGSC A1100 / Af293) (Neosartorya fumigata).